A 391-amino-acid polypeptide reads, in one-letter code: Na(+)/H(+) antiporter NhaA (391 aa).

The next 12 helical transmembrane spans lie at phenylalanine 9–isoleucine 29, tyrosine 36–alanine 56, leucine 59–valine 79, isoleucine 95–isoleucine 115, valine 123–leucine 143, leucine 154–phenylalanine 174, glycine 177–methionine 197, leucine 213–leucine 235, tryptophan 259–glycine 279, isoleucine 293–valine 313, isoleucine 329–leucine 349, and methionine 364–alanine 384.

This sequence belongs to the NhaA Na(+)/H(+) (TC 2.A.33) antiporter family.

It localises to the cell inner membrane. It catalyses the reaction Na(+)(in) + 2 H(+)(out) = Na(+)(out) + 2 H(+)(in). In terms of biological role, na(+)/H(+) antiporter that extrudes sodium in exchange for external protons. In Pseudomonas putida (strain GB-1), this protein is Na(+)/H(+) antiporter NhaA.